Here is a 708-residue protein sequence, read N- to C-terminus: Exocyst complex component 5 (708 aa).

Ala2 bears the N-acetylalanine mark. Positions 40–101 form a coiled coil; it reads KRLLEEFVNH…AFQHFQELDE (62 aa). Phosphothreonine is present on residues Thr122, Thr395, and Thr405. Ser412 is modified (phosphoserine).

This sequence belongs to the SEC10 family. As to quaternary structure, the exocyst complex is composed of EXOC1, EXOC2, EXOC3, EXOC4, EXOC5, EXOC6, EXOC7 and EXOC8. Interacts with EXOC3L1. As to expression, ubiquitous.

The protein resides in the cytoplasm. The protein localises to the midbody. Functionally, component of the exocyst complex involved in the docking of exocytic vesicles with fusion sites on the plasma membrane. This is Exocyst complex component 5 (Exoc5) from Rattus norvegicus (Rat).